We begin with the raw amino-acid sequence, 631 residues long: Mitochondrial Rho GTPase 1 (631 aa).

Residues 1 to 605 (MPAGRGRPLR…TQADLKSSTF (605 aa)) lie on the Cytoplasmic side of the membrane. The Miro 1 domain maps to 15 to 181 (KKDVRILLVG…FYYAQKAVLH (167 aa)). GTP is bound by residues Arg-27, Gly-29, Lys-30, Thr-31, and Ser-32. Residue Thr-31 participates in Mg(2+) binding. Mg(2+) is bound by residues Pro-48 and Asp-70. Position 72 (Ser-72) interacts with GTP. Position 105 is an N6-acetyllysine (Lys-105). GTP contacts are provided by Asn-131, Lys-132, Asp-134, Ala-162, and Lys-163. Lys-166 participates in a covalent cross-link: Glycyl lysine isopeptide (Lys-Gly) (interchain with G-Cter in ubiquitin). Positions 197-232 (ACIKALTRIFKISDQDNDGTLNDAELNFFQRICFNT) constitute an EF-hand 1 domain. Residues Asp-210, Asp-212, Asp-214, Thr-216, and Glu-221 each contribute to the Ca(2+) site. Residue Lys-248 forms a Glycyl lysine isopeptide (Lys-Gly) (interchain with G-Cter in ubiquitin) linkage. Positions 317–352 (HAYLFLQSTFDKHDLDRDCALSPDELKDLFKVFPYI) constitute an EF-hand 2 domain. Ca(2+) is bound by residues Asp-330, Asp-332, Asp-334, Ala-336, and Glu-341. One can recognise a Miro 2 domain in the interval 429–592 (RNVFRCNVIG…FVKLTTMAMY (164 aa)). Residues Asn-441, Cys-442, Gly-443, Lys-444, Ser-445, Gly-446, Lys-460, Lys-541, Asp-543, Thr-571, and Cys-572 each contribute to the GTP site. Asn-441 contacts Mg(2+). Residue Lys-585 forms a Glycyl lysine isopeptide (Lys-Gly) (interchain with G-Cter in ubiquitin) linkage. Residues 606–628 (WLRASFGATVFAVLGFAMYKALL) traverse the membrane as a helical; Anchor for type IV membrane protein segment. Topologically, residues 629-631 (KQR) are mitochondrial intermembrane.

It belongs to the mitochondrial Rho GTPase family. As to quaternary structure, homodimer. Interacts with the kinesin-binding proteins TRAK1/OIP106 and TRAK2/GRIF1, forming a link between mitochondria and the trafficking apparatus of the microtubules. Interacts with RAP1GDS1. Interacts with ARMCX1. Found in a complex with KIF5B, OGT, RHOT2 and TRAK1. Ubiquitinated by PRKN during mitophagy, leading to its degradation and enhancement of mitophagy. Deubiquitinated by USP30. In terms of processing, acetylation on Lys-105 decreases sensitivity of mitochondrial transport to elevated Ca(2+) levels, increases mitochondrial transport and promotes axon growth. Deacetylated by HDAC6 which blocks mitochondrial transport and mediates axon growth inhibition.

It localises to the mitochondrion outer membrane. It catalyses the reaction GTP + H2O = GDP + phosphate + H(+). It carries out the reaction ATP + H2O = ADP + phosphate + H(+). The enzyme catalyses UTP + H2O = UDP + phosphate + H(+). Atypical mitochondrial nucleoside-triphosphatase (NTPase) involved in mitochondrial trafficking. Probably involved in control of anterograde transport of mitochondria and their subcellular distribution. Promotes mitochondrial fission during high calcium conditions. Can hydrolyze GTP, ATP and UTP. The protein is Mitochondrial Rho GTPase 1 (RHOT1) of Bos taurus (Bovine).